A 344-amino-acid polypeptide reads, in one-letter code: Beta-hexosaminidase (344 aa).

Residues Asp-60, Arg-68, Arg-132, and 162–163 (KH) contribute to the substrate site. His-175 functions as the Proton donor/acceptor in the catalytic mechanism. Asp-247 serves as the catalytic Nucleophile.

It belongs to the glycosyl hydrolase 3 family. NagZ subfamily.

It is found in the cytoplasm. It carries out the reaction Hydrolysis of terminal non-reducing N-acetyl-D-hexosamine residues in N-acetyl-beta-D-hexosaminides.. It participates in cell wall biogenesis; peptidoglycan recycling. Its function is as follows. Plays a role in peptidoglycan recycling by cleaving the terminal beta-1,4-linked N-acetylglucosamine (GlcNAc) from peptide-linked peptidoglycan fragments, giving rise to free GlcNAc, anhydro-N-acetylmuramic acid and anhydro-N-acetylmuramic acid-linked peptides. The sequence is that of Beta-hexosaminidase from Haemophilus ducreyi (strain 35000HP / ATCC 700724).